The sequence spans 146 residues: Small ribosomal subunit protein uS5 (146 aa).

The region spanning 8–71 (FSEVVVNIGR…DDAFKNIIKV (64 aa)) is the S5 DRBM domain.

This sequence belongs to the universal ribosomal protein uS5 family. In terms of assembly, part of the 30S ribosomal subunit. Contacts proteins S4 and S8.

With S4 and S12 plays an important role in translational accuracy. In terms of biological role, located at the back of the 30S subunit body where it stabilizes the conformation of the head with respect to the body. This chain is Small ribosomal subunit protein uS5, found in Helicobacter hepaticus (strain ATCC 51449 / 3B1).